The sequence spans 232 residues: ATP-dependent Clp protease proteolytic subunit 2 (232 aa).

Serine 124 serves as the catalytic Nucleophile. Residue histidine 149 is part of the active site.

It belongs to the peptidase S14 family. In terms of assembly, fourteen ClpP subunits assemble into 2 heptameric rings which stack back to back to give a disk-like structure with a central cavity, resembling the structure of eukaryotic proteasomes.

The protein localises to the cytoplasm. It catalyses the reaction Hydrolysis of proteins to small peptides in the presence of ATP and magnesium. alpha-casein is the usual test substrate. In the absence of ATP, only oligopeptides shorter than five residues are hydrolyzed (such as succinyl-Leu-Tyr-|-NHMec, and Leu-Tyr-Leu-|-Tyr-Trp, in which cleavage of the -Tyr-|-Leu- and -Tyr-|-Trp bonds also occurs).. In terms of biological role, cleaves peptides in various proteins in a process that requires ATP hydrolysis. Has a chymotrypsin-like activity. Plays a major role in the degradation of misfolded proteins. This is ATP-dependent Clp protease proteolytic subunit 2 from Nostoc sp. (strain PCC 7120 / SAG 25.82 / UTEX 2576).